A 253-amino-acid chain; its full sequence is NADH-quinone oxidoreductase subunit C (253 aa).

Disordered regions lie at residues 1 to 33 (MSPD…DTEP) and 234 to 253 (IPVE…RAYS).

Belongs to the complex I 30 kDa subunit family. In terms of assembly, NDH-1 is composed of 14 different subunits. Subunits NuoB, C, D, E, F, and G constitute the peripheral sector of the complex.

The protein resides in the cell membrane. The enzyme catalyses a quinone + NADH + 5 H(+)(in) = a quinol + NAD(+) + 4 H(+)(out). Its function is as follows. NDH-1 shuttles electrons from NADH, via FMN and iron-sulfur (Fe-S) centers, to quinones in the respiratory chain. The immediate electron acceptor for the enzyme in this species is believed to be a menaquinone. Couples the redox reaction to proton translocation (for every two electrons transferred, four hydrogen ions are translocated across the cytoplasmic membrane), and thus conserves the redox energy in a proton gradient. The polypeptide is NADH-quinone oxidoreductase subunit C (Nocardia farcinica (strain IFM 10152)).